The chain runs to 77 residues: Protein OPG195 (77 aa).

Residues 1 to 17 (MRSLIIVLLFPSIIYSM) form the signal peptide.

This sequence belongs to the chordopoxvirinae B9 protein family.

This is Protein OPG195 (OPG197) from Homo sapiens (Human).